A 233-amino-acid chain; its full sequence is tRNA (guanine-N(7)-)-methyltransferase (233 aa).

Residues 1–36 form a disordered region; that stretch reads MSEFDPNPPRRNFYGRRHGKTLRQSQKGYLSEDLGS. 4 residues coordinate S-adenosyl-L-methionine: Glu68, Glu93, Asp120, and Asp142. Asp142 is an active-site residue. Substrate contacts are provided by residues Lys146, Asp178, and 211–214; that span reads TRYE.

It belongs to the class I-like SAM-binding methyltransferase superfamily. TrmB family.

It carries out the reaction guanosine(46) in tRNA + S-adenosyl-L-methionine = N(7)-methylguanosine(46) in tRNA + S-adenosyl-L-homocysteine. The protein operates within tRNA modification; N(7)-methylguanine-tRNA biosynthesis. Its function is as follows. Catalyzes the formation of N(7)-methylguanine at position 46 (m7G46) in tRNA. This Paracoccus denitrificans (strain Pd 1222) protein is tRNA (guanine-N(7)-)-methyltransferase.